A 432-amino-acid chain; its full sequence is Luc7-like protein 3 (432 aa).

Position 1 is an N-acetylmethionine (methionine 1). Phosphoserine occurs at positions 3, 110, and 115. Positions 124–181 form a coiled coil; it reads KNEEKIQVLTDKIDVLLQQIEELGSEGKVEEAQGMMKLVEQLKEERELLRSTTSTIES. N6-acetyllysine is present on lysine 231. The span at 234–287 shows a compositional bias: basic and acidic residues; that stretch reads LRKRTEEPDRDERLKKEKQEREEREKEREREREERERKRRREEEEREKERARDR. A disordered region spans residues 234–432; sequence LRKRTEEPDR…IKSEGDTQSN (199 aa). The segment covering 288–301 has biased composition (basic residues); that stretch reads ERRKRSRSRSRHSS. The span at 302–311 shows a compositional bias: basic and acidic residues; it reads RTSDRRCSRS. Positions 312 to 367 are enriched in basic residues; the sequence is RDHKRSRSRERRRSRSRDRRRSRSHDRSERKHRSRSRDRRRSKSRDRKSYKHRSKS. The span at 368-414 shows a compositional bias: basic and acidic residues; the sequence is RDREQDRKSKEKEKRGSDDKKSSVKSGSREKQSEDTNTESKESDTKN. Phosphoserine is present on serine 420. Basic and acidic residues predominate over residues 421 to 432; it reads EDIKSEGDTQSN. Lysine 424 participates in a covalent cross-link: Glycyl lysine isopeptide (Lys-Gly) (interchain with G-Cter in SUMO1); alternate. Lysine 424 participates in a covalent cross-link: Glycyl lysine isopeptide (Lys-Gly) (interchain with G-Cter in SUMO2); alternate. Phosphoserine is present on residues serine 425 and serine 431.

The protein belongs to the Luc7 family. In terms of assembly, may interact with SFRS1 and form homodimers. Interacts with JMJD6. Interacts with RBM25. Interacts with RSRC1 (via Arg/Ser-rich domain). Interacts with RRP1B. Phosphorylated in vitro by SRPK1, SRPK2 and CLK1. As to expression, widely expressed. Highest levels in heart, brain, pancreas, thymus, ovary, small intestine and peripheral blood leukocytes, as well as cerebellum, putamen and pituitary gland. Lowest levels in lung, liver and kidney. Also expressed in fetal tissues, including brain, heart, kidney, thymus and lung.

The protein localises to the nucleus speckle. Its function is as follows. Binds cAMP regulatory element DNA sequence. May play a role in RNA splicing. The sequence is that of Luc7-like protein 3 (LUC7L3) from Homo sapiens (Human).